Here is a 450-residue protein sequence, read N- to C-terminus: 6-phospho-beta-glucosidase (450 aa).

5–73 lines the NAD(+) pocket; the sequence is LKVVTIGGGS…VPMKLYKTLD (69 aa). Substrate-binding residues include Arg96 and Asn150. Mn(2+) contacts are provided by Cys172 and His203. The active-site Proton acceptor is the Tyr258.

In terms of assembly, homotetramer. NAD(+) is required as a cofactor. Mn(2+) serves as cofactor. It depends on Co(2+) as a cofactor. Requires Ni(2+) as cofactor.

It catalyses the reaction 6-phospho-beta-D-glucosyl-(1-&gt;4)-D-glucose + H2O = D-glucose 6-phosphate + D-glucose. In terms of biological role, hydrolyzes a wide variety of P-beta-glucosides including cellobiose-6P, salicin-6P, arbutin-6P, gentiobiose-6P, methyl-beta-glucoside-6P and p-nitrophenyl-beta-D-glucopyranoside-6P. Is also able to hydrolyze phospho-N,N'-diacetylchitobiose. The polypeptide is 6-phospho-beta-glucosidase (chbF) (Escherichia coli (strain K12)).